The following is a 517-amino-acid chain: MPFNGEKQCVSEDQQSDSESSRFAEGVASLSDYECSRQSFTSDSSSKSSSPASTSPPRGLMFDDVMAAAKNLSDMTLAHEIAVNENFQLKQNALPENSLAGQVKRVVHQAFWDVLEADLSAEPPQYEYAIKLFEEIREILLSFLTPGGNRLHSQICEVLDIDLIRQQAEHSAVDIQGLANYVITTMGKICAPVRDEDIRELKATTNIVEMLRQIFRVLDLMRMDMMNFVIRNIRPHIQHHLVEYERNKFQEVVEETPNALSQTTEWLKESIDKELLSETDVAPAAEHSSTPSLSPLLVLNNCYLKLLQWDYQKKVLPETLMTDGPRLQELSEKLNQLKMTACVALITNNMVGAVTEGLPELANRLKRISAVLLEGMNKETFNLKEALHSIGVQTCAEVNKALEERGSPTLNAEVQANLVGQLSSLEEKDNPVCTLMDKRIQLYMKGLLCLPSTQKSMPPVPGGLDVIQRELEVLGCQYANIVNLNKQVYGPFYANIFRKLLFRDEAVGKIDASLPTN.

Residues 1 to 59 are disordered; it reads MPFNGEKQCVSEDQQSDSESSRFAEGVASLSDYECSRQSFTSDSSSKSSSPASTSPPRG. S16 carries the post-translational modification Phosphoserine. The span at 36–55 shows a compositional bias: low complexity; that stretch reads SRQSFTSDSSSKSSSPASTS.

Belongs to the TCP11 family. In terms of assembly, interacts with FMNL2; this interaction promotes muscle-derived satellite cell (MDSC) migration and differentiation.

The protein resides in the cytoplasm. Its subcellular location is the cytoskeleton. Promotes the migration of muscle-derived satellite cells (MDSCs) during differentiation throught interaction with FMNL2 and therefore may participate in microfilament assembly. This Mus musculus (Mouse) protein is T-complex protein 11-like protein 2.